The chain runs to 404 residues: Cysteine desulfurase IscS (404 aa).

Residues 75–76 (AT), N155, Q183, and 203–205 (TGH) contribute to the pyridoxal 5'-phosphate site. An N6-(pyridoxal phosphate)lysine modification is found at K206. T243 provides a ligand contact to pyridoxal 5'-phosphate. Catalysis depends on C328, which acts as the Cysteine persulfide intermediate. Residue C328 participates in [2Fe-2S] cluster binding.

This sequence belongs to the class-V pyridoxal-phosphate-dependent aminotransferase family. NifS/IscS subfamily. In terms of assembly, homodimer. Forms a heterotetramer with IscU, interacts with other sulfur acceptors. Pyridoxal 5'-phosphate serves as cofactor.

The protein localises to the cytoplasm. The catalysed reaction is (sulfur carrier)-H + L-cysteine = (sulfur carrier)-SH + L-alanine. Its pathway is cofactor biosynthesis; iron-sulfur cluster biosynthesis. Master enzyme that delivers sulfur to a number of partners involved in Fe-S cluster assembly, tRNA modification or cofactor biosynthesis. Catalyzes the removal of elemental sulfur atoms from cysteine to produce alanine. Functions as a sulfur delivery protein for Fe-S cluster synthesis onto IscU, an Fe-S scaffold assembly protein, as well as other S acceptor proteins. The chain is Cysteine desulfurase IscS from Cronobacter sakazakii (strain ATCC BAA-894) (Enterobacter sakazakii).